Consider the following 458-residue polypeptide: Histone acetyltransferase KAT8 (458 aa).

Composition is skewed to low complexity over residues 1 to 17 (MAAQGATAAVAATTSGT) and 25 to 35 (PGENAAVEGPA). The segment at 1-52 (MAAQGATAAVAATTSGTVGEGEPGPGENAAVEGPARSPGRVSPPTPARGEPE) is disordered. Position 2 is an N-acetylalanine (alanine 2). 2 positions are modified to phosphoserine: serine 37 and serine 42. The Tudor-knot domain occupies 55-110 (VEIGETYLCRRPDSTWHSAEVIQSRVNDQEGREEFYVHYVGFNRRLDEWVDKNRLA). At lysine 113 the chain carries N6-acetyllysine. The Nuclear localization signal motif lies at 140 to 149 (RNQKRKHDEI). The 274-residue stretch at 174–447 (TKVKYVDKIH…VDSVCLKWAP (274 aa)) folds into the MYST-type HAT domain. The sufficient for interaction with KANSL1 stretch occupies residues 174–458 (TKVKYVDKIH…KHKQVKLSKK (285 aa)). A C2HC MYST-type zinc finger spans residues 207–232 (LWLCEYCLKYMKFEKSYRFHLGQCQW). Residues cysteine 210, cysteine 213, histidine 226, and cysteine 230 each coordinate Zn(2+). Lysine 274 bears the N6-acetyllysine mark. Acetyl-CoA contacts are provided by isoleucine 317, threonine 319, arginine 325, arginine 326, glycine 327, glycine 329, and lysine 330. Serine 348 is modified (phosphoserine). Glutamate 350 serves as the catalytic Proton donor/acceptor. Acetyl-CoA contacts are provided by serine 354, serine 363, tyrosine 408, and lysine 432.

Belongs to the MYST (SAS/MOZ) family. Component of a multisubunit histone acetyltransferase complex (MSL) at least composed of the MOF/KAT8, MSL1/hampin, MSL2L1 and MSL3L1. Component of the NSL complex at least composed of MOF/KAT8, KANSL1, KANSL2, KANSL3, MCRS1, PHF20, OGT1/OGT, WDR5 and HCFC1. Component of some MLL1/MLL complex, at least composed of the core components KMT2A/MLL1, ASH2L, HCFC1, WDR5 and RBBP5, as well as the facultative components BACC1, CHD8, E2F6, HSP70, INO80C, KANSL1, LAS1L, MAX, MCRS1, MGA, MOF/KAT8, PELP1, PHF20, PRP31, RING2, RUVB1/TIP49A, RUVB2/TIP49B, SENP3, TAF1, TAF4, TAF6, TAF7, TAF9 and TEX10. Interacts with the chromodomain of MORF4L1/MRG15. Interacts with ATM (via its Tudor-knot domain); possibly regulating the activity of ATM. Interacts with NELFD. In terms of processing, acetylation at Lys-274 facilitates cognate substrate Lys-binding and acetylation. Although considered as an autoacetylation event, acetylation at Lys-274 probably takes place via a non-enzymatic process following acetyl-CoA-binding, which primes KAT8 for cognate protein-lysine acetylation. During oocyte development, expressed in both oocytes and granulosa cells.

Its subcellular location is the nucleus. It is found in the chromosome. The protein localises to the mitochondrion. It catalyses the reaction L-lysyl-[histone] + acetyl-CoA = N(6)-acetyl-L-lysyl-[histone] + CoA + H(+). It carries out the reaction L-lysyl-[protein] + acetyl-CoA = N(6)-acetyl-L-lysyl-[protein] + CoA + H(+). The catalysed reaction is propanoyl-CoA + L-lysyl-[protein] = N(6)-propanoyl-L-lysyl-[protein] + CoA + H(+). Its activity is regulated as follows. The acetyltransferase activity is inhibited by anacardic acid derivatives. Functionally, histone acetyltransferase that catalyzes histone H4 acetylation at 'Lys-5'- and 'Lys-8' (H4K5ac and H4K8ac) or 'Lys-16' (H4K16ac), depending on the context. Catalytic component of the MSL histone acetyltransferase complex, a multiprotein complex that mediates the majority of histone H4 acetylation at 'Lys-16' (H4K16ac), an epigenetic mark that prevents chromatin compaction. H4K16ac constitutes the only acetylation mark intergenerationally transmitted and regulates key biological processes, such as oogenesis, embryonic stem cell pluripotency, hematopoiesis or glucose metabolism. The MSL complex is required for chromosome stability and genome integrity by maintaining homeostatic levels of H4K16ac. The MSL complex is also involved in gene dosage by promoting up-regulation of genes expressed by the X chromosome. X up-regulation is required to compensate for autosomal biallelic expression. The MSL complex also participates in gene dosage compensation by promoting expression of Tsix non-coding RNA. As part of the NSL histone acetyltransferase complex, catalyzes histone H4 acetylation at 'Lys-5'- and 'Lys-8' (H4K5ac and H4K8ac) at transcription start sites and promotes transcription initiation. The NSL complex also acts as a regulator of gene expression in mitochondria: KAT8 associates with mitochondrial DNA and controls expression of respiratory genes in an acetyltransferase-dependent mechanism. Also functions as an acetyltransferase for non-histone targets, such as ALKBH5, COX17, IRF3, KDM1A/LSD1, LMNA, PAX7 or TP53/p53. Acts as an inhibitor of antiviral immunity by acetylating IRF3, preventing IRF3 recruitment to promoters. Acts as a regulator of asymmetric division in muscle stem cells by mediating acetylation of PAX7. As part of the NSL complex, acetylates TP53/p53 at 'Lys-120'. Acts as a regulator of epithelial-to-mesenchymal transition as part of the NSL complex by mediating acetylation of KDM1A/LSD1. The NSL complex is required for nuclear architecture maintenance by mediating acetylation of LMNA. Promotes mitochondrial integrity by catalyzing acetylation of COX17. In addition to protein acetyltransferase activity, able to mediate protein propionylation. The polypeptide is Histone acetyltransferase KAT8 (Mus musculus (Mouse)).